We begin with the raw amino-acid sequence, 37 residues long: Large ribosomal subunit protein bL36 (37 aa).

The protein belongs to the bacterial ribosomal protein bL36 family.

This Rhodococcus erythropolis (strain PR4 / NBRC 100887) protein is Large ribosomal subunit protein bL36.